Here is a 321-residue protein sequence, read N- to C-terminus: Genome polyprotein (321 aa).

At 1 to 52 (RNLGKVIDTLTCGFADLMGYIPLVGAPLGGAARALAHGVRVLEDGVNYATGN) the chain is on the cytoplasmic side. The segment at 6-57 (VIDTLTCGFADLMGYIPLVGAPLGGAARALAHGVRVLEDGVNYATGNLPGCS) is interaction with APOA2. The segment at 48–51 (YATG) is important for lipid droplets localization. Residues 53 to 73 (LPGCSFSIFLLALLSCLTVPA) traverse the membrane as a helical segment. The propeptide at 62–75 (LLALLSCLTVPASA) is ER anchor for the core protein, removed in mature form by host signal peptidase. Over 74–242 (SAHQVRNSTG…AGAHWGVLAG (169 aa)) the chain is Lumenal. Asn80, Asn93, and Asn118 each carry an N-linked (GlcNAc...) asparagine; by host glycan. The tract at residues 149-180 (LVGSATLCSALYVGDLCGSVFLVGQLFTFSPR) is important for fusion. The N-linked (GlcNAc...) asparagine; by host glycan is linked to Asn189. A helical transmembrane segment spans residues 243–263 (IAYFSMVGNWAKVLVVLLLFA). At 264-321 (GVDAETYTSGGNAGHTMTGIVRFFAPGPKQNVHLINTNGSWHINSTALNCNDSLNTGW) the chain is on the lumenal side. Residues 268-294 (ETYTSGGNAGHTMTGIVRFFAPGPKQN) are HVR1. N-linked (GlcNAc...) (high mannose) asparagine; by host glycosylation is found at Asn301, Asn307, and Asn314.

It belongs to the hepacivirus polyprotein family. As to quaternary structure, homooligomer. Interacts with E1 (via C-terminus). Interacts with the non-structural protein 5A. Interacts (via N-terminus) with host STAT1 (via SH2 domain); this interaction results in decreased STAT1 phosphorylation and ubiquitin-mediated proteasome-dependent STAT1 degradation, leading to decreased IFN-stimulated gene transcription. Interacts with host STAT3; this interaction constitutively activates STAT3. Interacts with host LTBR receptor. Interacts with host TNFRSF1A receptor and possibly induces apoptosis. Interacts with host HNRPK. Interacts with host YWHAE. Interacts with host UBE3A/E6AP. Interacts with host DDX3X. Interacts with host APOA2. Interacts with host RXRA protein. Interacts with host SP110 isoform 3/Sp110b; this interaction sequesters the transcriptional corepressor SP110 away from the nucleus. Interacts with host CREB3 nuclear transcription protein; this interaction triggers cell transformation. Interacts with host ACY3. Interacts with host C1QR1. Interacts with host RBM24; this interaction, which enhances the interaction of the mature core protein with 5'-UTR, may inhibit viral translation and favor replication. Interacts with host EIF2AK2/PKR; this interaction induces the autophosphorylation of EIF2AK2. Part of the viral assembly initiation complex composed of NS2, E1, E2, NS3, NS4A, NS5A and the mature core protein. In terms of assembly, forms a heterodimer with envelope glycoprotein E2. Interacts with mature core protein. Interacts with protease NS2. The heterodimer E1/E2 interacts with host CLDN1; this interaction plays a role in viral entry into host cell. Interacts with host SPSB2 (via C-terminus). Part of the viral assembly initiation complex composed of NS2, E1, E2, NS3, NS4A, NS5A and the mature core protein. Forms a heterodimer with envelope glycoprotein E1. Interacts with host CD81 and SCARB1 receptors; these interactions play a role in viral entry into host cell. Interacts with host EIF2AK2/PKR; this interaction inhibits EIF2AK2 and probably allows the virus to evade the innate immune response. Interacts with host CD209/DC-SIGN and CLEC4M/DC-SIGNR. Interact with host SPCS1; this interaction is essential for viral particle assembly. Interacts with protease NS2. The heterodimer E1/E2 interacts with host CLDN1; this interaction plays a role in viral entry into host cell. Part of the viral assembly initiation complex composed of NS2, E1, E2, NS3, NS4A, NS5A and the mature core protein. Post-translationally, specific enzymatic cleavages in vivo yield mature proteins. The structural proteins, core, E1, E2 and p7 are produced by proteolytic processing by host signal peptidases. The core protein precursor is synthesized as a 23 kDa, which is retained in the ER membrane through the hydrophobic signal peptide. Cleavage by the signal peptidase releases the 21 kDa mature core protein. The cleavage of the core protein precursor occurs between aminoacids 176 and 188 but the exact cleavage site is not known. Some degraded forms of the core protein appear as well during the course of infection. The other proteins (p7, NS2, NS3, NS4A, NS4B, NS5A and NS5B) are cleaved by the viral proteases. Autoprocessing between NS2 and NS3 is mediated by the NS2 cysteine protease catalytic domain and regulated by the NS3 N-terminal domain. Phosphorylated by host PKC and PKA. In terms of processing, ubiquitinated; mediated by UBE3A and leading to core protein subsequent proteasomal degradation. Post-translationally, highly N-glycosylated.

Its subcellular location is the host endoplasmic reticulum membrane. It is found in the host mitochondrion membrane. The protein resides in the virion. The protein localises to the host cytoplasm. It localises to the host nucleus. Its subcellular location is the host lipid droplet. It is found in the virion membrane. In terms of biological role, packages viral RNA to form a viral nucleocapsid, and promotes virion budding. Participates in the viral particle production as a result of its interaction with the non-structural protein 5A. Binds RNA and may function as a RNA chaperone to induce the RNA structural rearrangements taking place during virus replication. Modulates viral translation initiation by interacting with viral IRES and 40S ribosomal subunit. Affects various cell signaling pathways, host immunity and lipid metabolism. Prevents the establishment of cellular antiviral state by blocking the interferon-alpha/beta (IFN-alpha/beta) and IFN-gamma signaling pathways and by blocking the formation of phosphorylated STAT1 and promoting ubiquitin-mediated proteasome-dependent degradation of STAT1. Activates STAT3 leading to cellular transformation. Regulates the activity of cellular genes, including c-myc and c-fos. May repress the promoter of p53, and sequester CREB3 and SP110 isoform 3/Sp110b in the cytoplasm. Represses cell cycle negative regulating factor CDKN1A, thereby interrupting an important check point of normal cell cycle regulation. Targets transcription factors involved in the regulation of inflammatory responses and in the immune response: suppresses TNF-induced NF-kappa-B activation, and activates AP-1. Binds to dendritic cells (DCs) via C1QR1, resulting in down-regulation of T-lymphocytes proliferation. Alters lipid metabolism by interacting with hepatocellular proteins involved in lipid accumulation and storage. Induces up-regulation of FAS promoter activity, and thereby contributes to the increased triglyceride accumulation in hepatocytes (steatosis). Functionally, forms a heterodimer with envelope glycoprotein E2, which mediates virus attachment to the host cell, virion internalization through clathrin-dependent endocytosis and fusion with host membrane. Fusion with the host cell is most likely mediated by both E1 and E2, through conformational rearrangements of the heterodimer required for fusion rather than a classical class II fusion mechanism. E1/E2 heterodimer binds host apolipoproteins such as APOB and ApoE thereby forming a lipo-viro-particle (LVP). APOE associated to the LVP allows the initial virus attachment to cell surface receptors such as the heparan sulfate proteoglycans (HSPGs), syndecan-1 (SDC1), syndecan-1 (SDC2), the low-density lipoprotein receptor (LDLR) and scavenger receptor class B type I (SCARB1). The cholesterol transfer activity of SCARB1 allows E2 exposure and binding of E2 to SCARB1 and the tetraspanin CD81. E1/E2 heterodimer binding on CD81 activates the epithelial growth factor receptor (EGFR) signaling pathway. Diffusion of the complex E1-E2-EGFR-SCARB1-CD81 to the cell lateral membrane allows further interaction with Claudin 1 (CLDN1) and occludin (OCLN) to finally trigger HCV entry. Its function is as follows. Forms a heterodimer with envelope glycoprotein E1, which mediates virus attachment to the host cell, virion internalization through clathrin-dependent endocytosis and fusion with host membrane. Fusion with the host cell is most likely mediated by both E1 and E2, through conformational rearrangements of the heterodimer required for fusion rather than a classical class II fusion mechanism. The interaction between envelope glycoprotein E2 and host apolipoprotein E/APOE allows the proper assembly, maturation and infectivity of the viral particles. This interaction is probably promoted via the up-regulation of cellular autophagy by the virus. E1/E2 heterodimer binds host apolipoproteins such as APOB and APOE thereby forming a lipo-viro-particle (LVP). APOE associated to the LVP allows the initial virus attachment to cell surface receptors such as the heparan sulfate proteoglycans (HSPGs), syndecan-1 (SDC1), syndecan-1 (SDC2), the low-density lipoprotein receptor (LDLR) and scavenger receptor class B type I (SCARB1). The cholesterol transfer activity of SCARB1 allows E2 exposure and binding of E2 to SCARB1 and the tetraspanin CD81. E1/E2 heterodimer binding on CD81 activates the epithelial growth factor receptor (EGFR) signaling pathway. Diffusion of the complex E1-E2-EGFR-SCARB1-CD81 to the cell lateral membrane allows further interaction with Claudin 1 (CLDN1) and occludin (OCLN) to finally trigger HCV entry. Inhibits host EIF2AK2/PKR activation, preventing the establishment of an antiviral state. Viral ligand for CD209/DC-SIGN and CLEC4M/DC-SIGNR, which are respectively found on dendritic cells (DCs), and on liver sinusoidal endothelial cells and macrophage-like cells of lymph node sinuses. These interactions allow the capture of circulating HCV particles by these cells and subsequent facilitated transmission to permissive cells such as hepatocytes and lymphocyte subpopulations. This Hepatitis C virus (isolate HCT18) (HCV) protein is Genome polyprotein.